Consider the following 2144-residue polypeptide: MTSRQNTNTPMPLAIIGMSCRFPGKVASLEDFWDMLSNSKHGYRQFPRERFNWEAFYHPNQSRKDCIDVNCGYFLDGDIAEFDAQFFKMNGTDAASFDPQGRMILECVYEALENAGVPKESIVGSKVGVFSTSNTSDYTLSLKDDIYSMPALVGVLGHACMLSNIVSNTFDLKGPSVSIDTACSSAFYALQLASQSLRSGETEMCIVSGCALNISPWRWTMLSNLTMLNPDGLSKSFDPQADAGYVRGEGAASIIVKPLDAAIRDNDRVHCVLSDIGVNHNGRTNGYTLPDARMQASLMRELQVRLDIKPDEFGFVEAHAPGTRVGDPIEISALQEVFSTSARTLEDPLLIGSVKANVGHLESSSGFPSLIKAAMMLKKGLVVPNANFENESMNSHLKEKNMRVPISTQPWPKGKTYIAINNYGFGGSNSHCIVRAPPIPQGLVSQKETRNVESDYLFVLSANDEVALRRTREQLVEFLESVDASSTTMQNTAYTLGQRRSLLSWRATVVASNIDDLIIQAASPQVIPRRVTRQPTLVFAFTGQGAQYFGVGRELLQYPVFSTTLKMASACAESFGANFSLQDELYGNEATSRINDADVSQPASTAIQIALVDLLRSWGIQPSAVVGHSSGEVAAAYAAGLLSLPGAMRIAYARGQMAIRIKKVQPDFKGGMLAVAAGPADVLPLLDIVTSGKVVIACENSPKSVTVSGDEAGLVELESLLEEDGLPHRRLAVDFPYHSTFLDPFIDDYEEAICTDDTFSNLQPTAEYFSAMAGRKVEPVTVQKPSYWASSAKFRVRFTSAAKALLRSKPSPNVVVEIGPNPTLVGSLKSILSEIKKEIPHPIEVVPSLHRGQNARTAMLKLGASLVSFGQRIDMEQVNFASGHISGQPPTLVDGIKPYPWTRSHHWIKSRVRDDDLHRPFPHHDLLGSINSSWGSKELVWKNNLDVENVPWLRDYQVASSITYPLAGYVCAAIEASKQFAMTRNLFLDRAFKGFTVRDMIIDESLVMKEGIPVELVTKLRSLPGTNFEEFEVLSWDEGQRAWKRCCRALVKCEATTDGVEQVEEMKWAESRAACHSCVGSPLLYQRLSKVGPRRTGKFRNVVDLRYGAGKTTAEVVVSDTKASMPQHYESDMTVHPTTIDGLFQCGSCIPFLDESSSVVGGSSNIWVPRSIKEFTIQTRPGEALKPEMVFRTVARVDKNERHDRSYSIDGTTDNAPICQIRIRGLKLAVEATLAPQWPAPHYGCYKIAWQNATELRSQAAQWHVLQGPGDVKNLAGSVSKKIGGTVRPLCEGVPSEASFCVVVDVGEGLLASVERESFNHIKQALTTCEGVLWVTCGAFGVSYDSTHPNAGMVTGLLRTIRSEMRASVASLDLDANASSDIEAQAALVKRVADHLAAAAQNADVQAEMEFTEKQGQLMVSRVVHDTQLDNVVHAVTGVIAPRTEPFDPEVRGFFTLQRPGMPDSLYLQRTDVPDPLDESEVEVRIAAIALDADDIHGLQGRALSGTVVRCGSTVTRVQPGDRVFGLANIDGAVRTFARAPETCLARTPANIPIDAAAALPATLGAAYHALVDLGRLVAGESVLIVAVGSALGQAAIQVALAKGALVFALAHSQEERDAAIVAGASIDRVVTTLVGLPPIQILFNPVSDANANLSMLGALAPLGRIVQVGEPSHQYPALAVGHSFSIAHLDAVADALPAQMAAILDAVVGLVDSKFVHSPPVRTVGLEYLSEALSNISETDSKKLLLVPGKNEMVKATPSCPAPPTFDPAAVYLLVGGSGGLGRVIAKWMLNNGARKIGLLSRSTSMSPDVRTLVDDAAGIGAEVFLLPCDVTSQHHLQRVIDQCVIEKGQIKGVINAAMVFKGGVFTSVSFDDFTSVVQPKVCGTWNLHHALREATLDFFILISSVAGIMGTPGHSAYASANTFLDSFAMYRMQQGLPATSLALTAVVDAGYMAENASKLQKLKYVSEFEGEILLTADVLALLGAAVTGSIASSCKGFSIIGAGFGTALKLPSYAQDPRFSTLTSNHSQDRKSKPRTTTAANTDTLVYAVDQADTKEEATQLLLAAIRDKIAQLQLIPVSDIVDDQTITELGLDSLTVMELYSWVGRLFRLRFGIQEYARLDTLEKIVDSVIVKREAAKVEAP.

The Ketosynthase family 3 (KS3) domain maps to 10 to 436 (PMPLAIIGMS…GSNSHCIVRA (427 aa)). Active-site for beta-ketoacyl synthase activity residues include cysteine 183, histidine 319, and histidine 360. The malonyl-CoA:ACP transacylase (MAT) stretch occupies residues 538–855 (VFAFTGQGAQ…VPSLHRGQNA (318 aa)). The tract at residues 924–1058 (HDLLGSINSS…ALVKCEATTD (135 aa)) is N-terminal hotdog fold. Residues 924–1214 (HDLLGSINSS…RSYSIDGTTD (291 aa)) are dehydratase (DH) domain. One can recognise a PKS/mFAS DH domain in the interval 924 to 1237 (HDLLGSINSS…LAVEATLAPQ (314 aa)). The C-terminal hotdog fold stretch occupies residues 1076 to 1237 (HSCVGSPLLY…LAVEATLAPQ (162 aa)). Residues 1461 to 1747 (GMPDSLYLQR…SETDSKKLLL (287 aa)) are enoyl reductase (ER) domain. The tract at residues 1771-1948 (AVYLLVGGSG…PATSLALTAV (178 aa)) is ketoreductase (KR) domain. A Carrier domain is found at 2059–2136 (EATQLLLAAI…KIVDSVIVKR (78 aa)). At serine 2096 the chain carries O-(pantetheine 4'-phosphoryl)serine.

Its pathway is mycotoxin biosynthesis. Functionally, reducing polyketide synthase (PKS); part of the Tox1A locus, one of the 2 loci that mediate the biosynthesis of T-toxin, a family of linear polyketides 37 to 45 carbons in length, of which the major component is 41 carbons, and which leads to high virulence to maize. One of the PKSs (PKS1 or PKS2) could synthesize a precursor, used subsequently by the other PKS as starter unit, to add additional carbons. Variability in the length of the final carbon backbone C35-47 could be achieved by varying the number of condensation cycles, or use of different starter or extender units or might be due to decarboxylation of the penultimate product, catalyzed by DEC1. Additional proteins are required for the biosynthesis of T-toxin, including oxidoreductases RED1, RED2, RED3, LAM1 and OXI1, as well as esterase TOX9. The chain is Reducing polyketide synthase PKS2 from Cochliobolus heterostrophus (strain C4 / ATCC 48331 / race T) (Southern corn leaf blight fungus).